Here is a 468-residue protein sequence, read N- to C-terminus: Transmembrane protein 151B (468 aa).

A disordered region spans residues 1-25; it reads MPEDGGGDSGDVPEIIPDGEPLREE. A run of 2 helical transmembrane segments spans residues 45–65 and 98–118; these read CLLLTLLIHACGAVVAWCRLA and YLYIPLAFVSLLYLLYLAECW. The tract at residues 384-438 is disordered; the sequence is VSSNSLPPARPSGPRLPFSRSRLSLGAGGRATPGVFRSLSGGPLGRRGEDTEPLE.

This sequence belongs to the TMEM151 family.

It localises to the membrane. This chain is Transmembrane protein 151B (TMEM151B), found in Bos taurus (Bovine).